The following is a 339-amino-acid chain: D-alanine--D-alanine ligase (339 aa).

The ATP-grasp domain occupies 115 to 327 (KHIFRSLGID…FNELVKIIIE (213 aa)). 142–211 (KIDYPYVLKP…EEYIPGIELH (70 aa)) provides a ligand contact to ATP. Residues Asp-279, Glu-293, and Asn-295 each contribute to the Mg(2+) site.

It belongs to the D-alanine--D-alanine ligase family. Requires Mg(2+) as cofactor. The cofactor is Mn(2+).

It is found in the cytoplasm. It carries out the reaction 2 D-alanine + ATP = D-alanyl-D-alanine + ADP + phosphate + H(+). Its pathway is cell wall biogenesis; peptidoglycan biosynthesis. Cell wall formation. This Wolbachia sp. subsp. Brugia malayi (strain TRS) protein is D-alanine--D-alanine ligase.